Reading from the N-terminus, the 166-residue chain is Interferon gamma (166 aa).

The signal sequence occupies residues 1–23 (MKYTSYILAFQLCVVLGSLGCYC). The residue at position 24 (glutamine 24) is a Pyrrolidone carboxylic acid. Asparagine 48, asparagine 86, and asparagine 120 each carry an N-linked (GlcNAc...) asparagine glycan.

The protein belongs to the type II (or gamma) interferon family. As to quaternary structure, homodimer. Interacts with IFNGR1 (via extracellular domain); this interaction promotes IFNGR1 dimerization. As to expression, released primarily from activated T lymphocytes.

It localises to the secreted. In terms of biological role, type II interferon produced by immune cells such as T-cells and NK cells that plays crucial roles in antimicrobial, antiviral, and antitumor responses by activating effector immune cells and enhancing antigen presentation. Primarily signals through the JAK-STAT pathway after interaction with its receptor IFNGR1 to affect gene regulation. Upon IFNG binding, IFNGR1 intracellular domain opens out to allow association of downstream signaling components JAK2, JAK1 and STAT1, leading to STAT1 activation, nuclear translocation and transcription of IFNG-regulated genes. Many of the induced genes are transcription factors such as IRF1 that are able to further drive regulation of a next wave of transcription. Plays a role in class I antigen presentation pathway by inducing a replacement of catalytic proteasome subunits with immunoproteasome subunits. In turn, increases the quantity, quality, and repertoire of peptides for class I MHC loading. Increases the efficiency of peptide generation also by inducing the expression of activator PA28 that associates with the proteasome and alters its proteolytic cleavage preference. Up-regulates as well MHC II complexes on the cell surface by promoting expression of several key molecules such as cathepsins B/CTSB, H/CTSH, and L/CTSL. Participates in the regulation of hematopoietic stem cells during development and under homeostatic conditions by affecting their development, quiescence, and differentiation. This Callithrix jacchus (White-tufted-ear marmoset) protein is Interferon gamma (IFNG).